Reading from the N-terminus, the 249-residue chain is ATP synthase subunit a (249 aa).

The next 6 helical transmembrane spans lie at 33–53 (YMLI…AQLV), 83–103 (FFPL…IGII), 113–133 (LIVT…YGVA), 139–159 (FFSI…VMFI), 188–208 (VFAG…WVGG), and 216–236 (VALY…FAIL).

This sequence belongs to the ATPase A chain family. In terms of assembly, F-type ATPases have 2 components, CF(1) - the catalytic core - and CF(0) - the membrane proton channel. CF(1) has five subunits: alpha(3), beta(3), gamma(1), delta(1), epsilon(1). CF(0) has three main subunits: a(1), b(2) and c(9-12). The alpha and beta chains form an alternating ring which encloses part of the gamma chain. CF(1) is attached to CF(0) by a central stalk formed by the gamma and epsilon chains, while a peripheral stalk is formed by the delta and b chains.

It localises to the cell inner membrane. Key component of the proton channel; it plays a direct role in the translocation of protons across the membrane. The polypeptide is ATP synthase subunit a (Bradyrhizobium diazoefficiens (strain JCM 10833 / BCRC 13528 / IAM 13628 / NBRC 14792 / USDA 110)).